The primary structure comprises 185 residues: Ribosome-recycling factor (185 aa).

The protein belongs to the RRF family.

Its subcellular location is the cytoplasm. Its function is as follows. Responsible for the release of ribosomes from messenger RNA at the termination of protein biosynthesis. May increase the efficiency of translation by recycling ribosomes from one round of translation to another. This is Ribosome-recycling factor from Roseiflexus castenholzii (strain DSM 13941 / HLO8).